A 284-amino-acid chain; its full sequence is Bifunctional protein FolD (284 aa).

NADP(+) is bound at residue 166-168; sequence GAS.

Belongs to the tetrahydrofolate dehydrogenase/cyclohydrolase family. As to quaternary structure, homodimer.

The catalysed reaction is (6R)-5,10-methylene-5,6,7,8-tetrahydrofolate + NADP(+) = (6R)-5,10-methenyltetrahydrofolate + NADPH. It catalyses the reaction (6R)-5,10-methenyltetrahydrofolate + H2O = (6R)-10-formyltetrahydrofolate + H(+). It participates in one-carbon metabolism; tetrahydrofolate interconversion. In terms of biological role, catalyzes the oxidation of 5,10-methylenetetrahydrofolate to 5,10-methenyltetrahydrofolate and then the hydrolysis of 5,10-methenyltetrahydrofolate to 10-formyltetrahydrofolate. This is Bifunctional protein FolD from Legionella pneumophila subsp. pneumophila (strain Philadelphia 1 / ATCC 33152 / DSM 7513).